Consider the following 218-residue polypeptide: Riboflavin kinase (218 aa).

The N-terminal stretch at 1-19 (MFTWTIYVSLLLVLAGTFL) is a signal peptide. Mg(2+) is bound by residues Thr72 and Asn74. Glu155 acts as the Nucleophile in catalysis.

It belongs to the flavokinase family. Zn(2+) serves as cofactor. Mg(2+) is required as a cofactor.

It is found in the microsome. The protein localises to the mitochondrion inner membrane. Its subcellular location is the endoplasmic reticulum. The catalysed reaction is riboflavin + ATP = FMN + ADP + H(+). It participates in cofactor biosynthesis; FMN biosynthesis; FMN from riboflavin (ATP route): step 1/1. Its function is as follows. Catalyzes the phosphorylation of riboflavin (vitamin B2) to form flavin mononucleotide (FMN) coenzyme. This chain is Riboflavin kinase (FMN1), found in Saccharomyces cerevisiae (strain ATCC 204508 / S288c) (Baker's yeast).